We begin with the raw amino-acid sequence, 273 residues long: Shikimate dehydrogenase (NADP(+)) (273 aa).

Residues 14-16 and threonine 61 each bind shikimate; that span reads SKS. The active-site Proton acceptor is lysine 65. Aspartate 77 lines the NADP(+) pocket. Residues asparagine 86 and aspartate 102 each contribute to the shikimate site. NADP(+) is bound by residues 127–131, 151–156, and methionine 215; these read GAGGA and NRTGAR. Tyrosine 217 is a binding site for shikimate. Position 239 (glycine 239) interacts with NADP(+).

The protein belongs to the shikimate dehydrogenase family. In terms of assembly, homodimer.

The enzyme catalyses shikimate + NADP(+) = 3-dehydroshikimate + NADPH + H(+). The protein operates within metabolic intermediate biosynthesis; chorismate biosynthesis; chorismate from D-erythrose 4-phosphate and phosphoenolpyruvate: step 4/7. Functionally, involved in the biosynthesis of the chorismate, which leads to the biosynthesis of aromatic amino acids. Catalyzes the reversible NADPH linked reduction of 3-dehydroshikimate (DHSA) to yield shikimate (SA). The sequence is that of Shikimate dehydrogenase (NADP(+)) from Thioalkalivibrio sulfidiphilus (strain HL-EbGR7).